The following is a 449-amino-acid chain: Phosphoglucosamine mutase (449 aa).

Catalysis depends on Ser-100, which acts as the Phosphoserine intermediate. Mg(2+) is bound by residues Ser-100, Asp-241, Asp-243, and Asp-245. Position 100 is a phosphoserine (Ser-100).

Belongs to the phosphohexose mutase family. Mg(2+) serves as cofactor. In terms of processing, activated by phosphorylation.

The enzyme catalyses alpha-D-glucosamine 1-phosphate = D-glucosamine 6-phosphate. In terms of biological role, catalyzes the conversion of glucosamine-6-phosphate to glucosamine-1-phosphate. This Clostridium botulinum (strain Loch Maree / Type A3) protein is Phosphoglucosamine mutase.